Reading from the N-terminus, the 368-residue chain is Ferredoxin--NADP reductase 2 (368 aa).

7 residues coordinate FAD: Asp-57, Gln-65, Tyr-70, Val-110, Phe-145, Asp-310, and Thr-351.

It belongs to the ferredoxin--NADP reductase type 2 family. As to quaternary structure, homodimer. The cofactor is FAD.

It catalyses the reaction 2 reduced [2Fe-2S]-[ferredoxin] + NADP(+) + H(+) = 2 oxidized [2Fe-2S]-[ferredoxin] + NADPH. The polypeptide is Ferredoxin--NADP reductase 2 (Cupriavidus pinatubonensis (strain JMP 134 / LMG 1197) (Cupriavidus necator (strain JMP 134))).